Here is a 318-residue protein sequence, read N- to C-terminus: Oxygen-evolving enhancer protein 1, chloroplastic (318 aa).

The N-terminal stretch at 1-18 is a signal peptide; it reads MKAVIAVFITLMLTAVVA. A helical transmembrane segment spans residues 45-65; sequence AAAAALAALTTLSVISPSFAI.

Belongs to the PsbO family.

The protein resides in the plastid. It localises to the chloroplast thylakoid membrane. Functionally, stabilizes the manganese cluster which is the primary site of water splitting. This chain is Oxygen-evolving enhancer protein 1, chloroplastic, found in Chattonella marina var. antiqua (Red tide flagellate).